The following is a 392-amino-acid chain: O-phospho-L-seryl-tRNA:Cys-tRNA synthase 1 (392 aa).

Residues A85 to R86, N190, and S213 to H215 each bind pyridoxal 5'-phosphate. At K216 the chain carries N6-(pyridoxal phosphate)lysine.

Belongs to the SepCysS family. Homodimer. Interacts with SepRS. Requires pyridoxal 5'-phosphate as cofactor.

It carries out the reaction O-phospho-L-seryl-tRNA(Cys) + hydrogen sulfide + H(+) = L-cysteinyl-tRNA(Cys) + phosphate. Functionally, converts O-phospho-L-seryl-tRNA(Cys) (Sep-tRNA(Cys)) to L-cysteinyl-tRNA(Cys) (Cys-tRNA(Cys)). The polypeptide is O-phospho-L-seryl-tRNA:Cys-tRNA synthase 1 (Methanoregula boonei (strain DSM 21154 / JCM 14090 / 6A8)).